Here is a 401-residue protein sequence, read N- to C-terminus: Probable tRNA sulfurtransferase (401 aa).

Positions E60 to N165 constitute a THUMP domain. Residues M183–L184, H208–F209, R265, G287, and Q296 contribute to the ATP site.

It belongs to the ThiI family.

Its subcellular location is the cytoplasm. The enzyme catalyses [ThiI sulfur-carrier protein]-S-sulfanyl-L-cysteine + a uridine in tRNA + 2 reduced [2Fe-2S]-[ferredoxin] + ATP + H(+) = [ThiI sulfur-carrier protein]-L-cysteine + a 4-thiouridine in tRNA + 2 oxidized [2Fe-2S]-[ferredoxin] + AMP + diphosphate. The catalysed reaction is [ThiS sulfur-carrier protein]-C-terminal Gly-Gly-AMP + S-sulfanyl-L-cysteinyl-[cysteine desulfurase] + AH2 = [ThiS sulfur-carrier protein]-C-terminal-Gly-aminoethanethioate + L-cysteinyl-[cysteine desulfurase] + A + AMP + 2 H(+). It functions in the pathway cofactor biosynthesis; thiamine diphosphate biosynthesis. In terms of biological role, catalyzes the ATP-dependent transfer of a sulfur to tRNA to produce 4-thiouridine in position 8 of tRNAs, which functions as a near-UV photosensor. Also catalyzes the transfer of sulfur to the sulfur carrier protein ThiS, forming ThiS-thiocarboxylate. This is a step in the synthesis of thiazole, in the thiamine biosynthesis pathway. The sulfur is donated as persulfide by IscS. The chain is Probable tRNA sulfurtransferase from Bacillus velezensis (strain DSM 23117 / BGSC 10A6 / LMG 26770 / FZB42) (Bacillus amyloliquefaciens subsp. plantarum).